A 336-amino-acid chain; its full sequence is DNA-directed RNA polymerase subunit alpha (336 aa).

The tract at residues 1–232 is alpha N-terminal domain (alpha-NTD); that stretch reads MIQKNWQELI…DQLGLFVNFE (232 aa). The interval 248-336 is alpha C-terminal domain (alpha-CTD); sequence FNPALLKKVD…ELAKRYEDQY (89 aa).

The protein belongs to the RNA polymerase alpha chain family. Homodimer. The RNAP catalytic core consists of 2 alpha, 1 beta, 1 beta' and 1 omega subunit. When a sigma factor is associated with the core the holoenzyme is formed, which can initiate transcription.

It carries out the reaction RNA(n) + a ribonucleoside 5'-triphosphate = RNA(n+1) + diphosphate. Functionally, DNA-dependent RNA polymerase catalyzes the transcription of DNA into RNA using the four ribonucleoside triphosphates as substrates. The protein is DNA-directed RNA polymerase subunit alpha of Chelativorans sp. (strain BNC1).